Here is a 481-residue protein sequence, read N- to C-terminus: 2-succinylbenzoate--CoA ligase (481 aa).

Belongs to the ATP-dependent AMP-binding enzyme family. MenE subfamily.

It carries out the reaction 2-succinylbenzoate + ATP + CoA = 2-succinylbenzoyl-CoA + AMP + diphosphate. Its pathway is quinol/quinone metabolism; 1,4-dihydroxy-2-naphthoate biosynthesis; 1,4-dihydroxy-2-naphthoate from chorismate: step 5/7. The protein operates within quinol/quinone metabolism; menaquinone biosynthesis. Its function is as follows. Converts 2-succinylbenzoate (OSB) to 2-succinylbenzoyl-CoA (OSB-CoA). In Bacillus cereus (strain Q1), this protein is 2-succinylbenzoate--CoA ligase.